A 446-amino-acid polypeptide reads, in one-letter code: C4-dicarboxylate transport protein (446 aa).

9 helical membrane passes run 25–45 (VQVL…PAIG), 58–78 (LVKM…IASI), 93–113 (FAYF…VANV), 159–179 (ALTE…GLAL), 199–219 (VFFG…FGAM), 236–256 (LLIA…LGAV), 322–342 (IYMT…LSLG), 370–390 (AATL…ILGI), and 400–420 (LTNF…EKGL).

The protein belongs to the dicarboxylate/amino acid:cation symporter (DAACS) (TC 2.A.23) family.

The protein resides in the cell inner membrane. In terms of biological role, responsible for the transport of dicarboxylates such as succinate, fumarate, and malate from the periplasm across the membrane. This Sphingopyxis alaskensis (strain DSM 13593 / LMG 18877 / RB2256) (Sphingomonas alaskensis) protein is C4-dicarboxylate transport protein.